An 847-amino-acid polypeptide reads, in one-letter code: Protein translocase subunit SecA (847 aa).

ATP-binding positions include glutamine 87, glycine 105–threonine 109, and aspartate 495. The interval serine 828–valine 847 is disordered. Basic and acidic residues predominate over residues alanine 835–valine 847.

It belongs to the SecA family. Monomer and homodimer. Part of the essential Sec protein translocation apparatus which comprises SecA, SecYEG and auxiliary proteins SecDF. Other proteins may also be involved.

The protein resides in the cell membrane. It localises to the cytoplasm. The catalysed reaction is ATP + H2O + cellular proteinSide 1 = ADP + phosphate + cellular proteinSide 2.. Functionally, part of the Sec protein translocase complex. Interacts with the SecYEG preprotein conducting channel. Has a central role in coupling the hydrolysis of ATP to the transfer of proteins into and across the cell membrane, serving as an ATP-driven molecular motor driving the stepwise translocation of polypeptide chains across the membrane. This chain is Protein translocase subunit SecA, found in Tropheryma whipplei (strain TW08/27) (Whipple's bacillus).